The following is a 196-amino-acid chain: dCTP deaminase (196 aa).

Residues Arg-113 to Arg-118, Asp-131, Val-139 to Glu-141, Tyr-174, Lys-181, and Gln-185 contribute to the dCTP site. The active-site Proton donor/acceptor is Glu-141.

The protein belongs to the dCTP deaminase family. As to quaternary structure, homotrimer.

The enzyme catalyses dCTP + H2O + H(+) = dUTP + NH4(+). Its pathway is pyrimidine metabolism; dUMP biosynthesis; dUMP from dCTP (dUTP route): step 1/2. Its function is as follows. Catalyzes the deamination of dCTP to dUTP. The protein is dCTP deaminase of Wigglesworthia glossinidia brevipalpis.